The following is a 221-amino-acid chain: Probable septum site-determining protein MinC (221 aa).

This sequence belongs to the MinC family. As to quaternary structure, interacts with MinD and FtsZ.

Functionally, cell division inhibitor that blocks the formation of polar Z ring septums. Rapidly oscillates between the poles of the cell to destabilize FtsZ filaments that have formed before they mature into polar Z rings. Prevents FtsZ polymerization. The sequence is that of Probable septum site-determining protein MinC from Shewanella sp. (strain ANA-3).